A 223-amino-acid chain; its full sequence is Deoxyribose-phosphate aldolase (223 aa).

Residue Asp89 is the Proton donor/acceptor of the active site. The active-site Schiff-base intermediate with acetaldehyde is the Lys152. Lys181 functions as the Proton donor/acceptor in the catalytic mechanism.

It belongs to the DeoC/FbaB aldolase family. DeoC type 1 subfamily.

Its subcellular location is the cytoplasm. The catalysed reaction is 2-deoxy-D-ribose 5-phosphate = D-glyceraldehyde 3-phosphate + acetaldehyde. It participates in carbohydrate degradation; 2-deoxy-D-ribose 1-phosphate degradation; D-glyceraldehyde 3-phosphate and acetaldehyde from 2-deoxy-alpha-D-ribose 1-phosphate: step 2/2. Its function is as follows. Catalyzes a reversible aldol reaction between acetaldehyde and D-glyceraldehyde 3-phosphate to generate 2-deoxy-D-ribose 5-phosphate. The chain is Deoxyribose-phosphate aldolase from Bacillus cereus (strain G9842).